The sequence spans 257 residues: Gene 3 protein (257 aa).

The segment covering 163-176 has biased composition (polar residues); sequence STENLLGQTQSSTH. The tract at residues 163 to 257 is disordered; that stretch reads STENLLGQTQ…SDSSVSSVFF (95 aa). Over residues 214–240 the composition is skewed to basic and acidic residues; the sequence is SIREETVSGMARAREECNSPSEHDRLT.

The sequence is that of Gene 3 protein from Equine herpesvirus 1 (strain Ab4p) (EHV-1).